The primary structure comprises 131 residues: Fluoride-specific ion channel FluC 2 (131 aa).

4 helical membrane-spanning segments follow: residues 5-25 (FGVA…SLLV), 39-59 (LATL…TTLA), 70-90 (LAVG…AWES), and 104-124 (LYVL…RALA). Residues glycine 78 and threonine 81 each coordinate Na(+).

Belongs to the fluoride channel Fluc/FEX (TC 1.A.43) family.

It localises to the cell membrane. The catalysed reaction is fluoride(in) = fluoride(out). Its activity is regulated as follows. Na(+) is not transported, but it plays an essential structural role and its presence is essential for fluoride channel function. In terms of biological role, fluoride-specific ion channel. Important for reducing fluoride concentration in the cell, thus reducing its toxicity. In Deinococcus geothermalis (strain DSM 11300 / CIP 105573 / AG-3a), this protein is Fluoride-specific ion channel FluC 2.